Reading from the N-terminus, the 697-residue chain is Elongation factor G (697 aa).

One can recognise a tr-type G domain in the interval 6–281 (ENIRNIGICA…AVVDYLPSPI (276 aa)). GTP is bound by residues 15–22 (AHIDAGKT), 79–83 (DTPGH), and 133–136 (NKMD).

This sequence belongs to the TRAFAC class translation factor GTPase superfamily. Classic translation factor GTPase family. EF-G/EF-2 subfamily.

The protein resides in the cytoplasm. In terms of biological role, catalyzes the GTP-dependent ribosomal translocation step during translation elongation. During this step, the ribosome changes from the pre-translocational (PRE) to the post-translocational (POST) state as the newly formed A-site-bound peptidyl-tRNA and P-site-bound deacylated tRNA move to the P and E sites, respectively. Catalyzes the coordinated movement of the two tRNA molecules, the mRNA and conformational changes in the ribosome. This chain is Elongation factor G, found in Rickettsia bellii (strain OSU 85-389).